The sequence spans 873 residues: Bifunctional heparan sulfate N-deacetylase/N-sulfotransferase 3 (873 aa).

Residues 1-13 are Cytoplasmic-facing; sequence MSFIMKPHRHFQR. Residues 14–34 form a helical; Signal-anchor for type II membrane protein membrane-spanning segment; sequence TLILLATFCMVSIIISAYYLY. At 35 to 873 the chain is on the lumenal side; that stretch reads SGYKQESEVS…WLRQELQKVR (839 aa). The interval 36–589 is heparan sulfate N-deacetylase 3; it reads GYKQESEVSG…KRHRDIWSKE (554 aa). 4 N-linked (GlcNAc...) asparagine glycosylation sites follow: Asn-146, Asn-226, Asn-342, and Asn-392. A heparan sulfate N-sulfotransferase 3 region spans residues 590–873; sequence KTCDRLPKFL…WLRQELQKVR (284 aa). Residue Lys-605 is the For sulfotransferase activity of the active site. 605 to 609 contacts 3'-phosphoadenylyl sulfate; it reads KTGTT. A glycan (N-linked (GlcNAc...) asparagine) is linked at Asn-658. Ser-703 is a binding site for 3'-phosphoadenylyl sulfate. Residue Asn-794 is glycosylated (N-linked (GlcNAc...) asparagine). Cys-809 and Cys-819 are joined by a disulfide. 824-828 lines the 3'-phosphoadenylyl sulfate pocket; it reads KGRKY.

Belongs to the sulfotransferase 1 family. NDST subfamily. In terms of assembly, monomer. Strongly expressed strongly in brain. Expressed at high level at embryonic day 11 compared to other stages of development. Weakly expressed in adult heart, kidney, muscle, endothelial cells and testis but not in other tissues.

It localises to the golgi apparatus membrane. It carries out the reaction alpha-D-glucosaminyl-[heparan sulfate](n) + 3'-phosphoadenylyl sulfate = N-sulfo-alpha-D-glucosaminyl-[heparan sulfate](n) + adenosine 3',5'-bisphosphate + 2 H(+). It functions in the pathway glycan metabolism; heparan sulfate biosynthesis. It participates in glycan metabolism; heparin biosynthesis. Essential bifunctional enzyme that catalyzes both the N-deacetylation and the N-sulfation of glucosamine (GlcNAc) of the glycosaminoglycan in heparan sulfate. Modifies the GlcNAc-GlcA disaccharide repeating sugar backbone to make N-sulfated heparosan, a prerequisite substrate for later modifications in heparin biosynthesis. Has high deacetylase activity but low sulfotransferase activity. The protein is Bifunctional heparan sulfate N-deacetylase/N-sulfotransferase 3 (Ndst3) of Mus musculus (Mouse).